A 400-amino-acid polypeptide reads, in one-letter code: Tyrosine--tRNA ligase (400 aa).

A 'HIGH' region motif is present at residues 42–51; sequence PTAPDLHLGH. A 'KMSKS' region motif is present at residues 226–230; the sequence is KMSKS. ATP is bound at residue lysine 229. Residues 339–399 enclose the S4 RNA-binding domain; it reads FSISYILRRA…GKKKIAQIFV (61 aa).

The protein belongs to the class-I aminoacyl-tRNA synthetase family. TyrS type 2 subfamily. As to quaternary structure, homodimer.

The protein resides in the cytoplasm. It catalyses the reaction tRNA(Tyr) + L-tyrosine + ATP = L-tyrosyl-tRNA(Tyr) + AMP + diphosphate + H(+). Functionally, catalyzes the attachment of tyrosine to tRNA(Tyr) in a two-step reaction: tyrosine is first activated by ATP to form Tyr-AMP and then transferred to the acceptor end of tRNA(Tyr). The chain is Tyrosine--tRNA ligase from Hahella chejuensis (strain KCTC 2396).